The chain runs to 209 residues: High frequency lysogenization protein HflD homolog (209 aa).

Residues 95–132 are a coiled coil; that stretch reads LERKLAASKGAMNTLGNRIADLSRQLEHFELESDTLMS.

It belongs to the HflD family.

The protein localises to the cytoplasm. It is found in the cell inner membrane. The sequence is that of High frequency lysogenization protein HflD homolog from Cronobacter sakazakii (strain ATCC BAA-894) (Enterobacter sakazakii).